Here is a 476-residue protein sequence, read N- to C-terminus: Cysteine--tRNA ligase (476 aa).

C29 contacts Zn(2+). The 'HIGH' region signature appears at 31 to 41 (PTVYDYTHLGH). 3 residues coordinate Zn(2+): C209, H234, and E238. The short motif at 266–270 (KMSKS) is the 'KMSKS' region element. K269 contacts ATP.

It belongs to the class-I aminoacyl-tRNA synthetase family. It depends on Zn(2+) as a cofactor.

The protein resides in the cytoplasm. The enzyme catalyses tRNA(Cys) + L-cysteine + ATP = L-cysteinyl-tRNA(Cys) + AMP + diphosphate. The polypeptide is Cysteine--tRNA ligase (Thermococcus onnurineus (strain NA1)).